The sequence spans 79 residues: Putative defensin-like protein 137 (79 aa).

Residues 1-24 (MKKYFQPSFVILIIFTVLVLGVVG) form the signal peptide. Disulfide bonds link cysteine 33/cysteine 78, cysteine 42/cysteine 62, cysteine 47/cysteine 72, and cysteine 51/cysteine 74.

The protein belongs to the DEFL family.

Its subcellular location is the secreted. In Arabidopsis thaliana (Mouse-ear cress), this protein is Putative defensin-like protein 137 (LCR14).